Consider the following 718-residue polypeptide: LON peptidase N-terminal domain and RING finger protein 3 (718 aa).

Positions 1–69 (MESLRTEQML…PGTSTPESKV (69 aa)) are disordered. A compositionally biased stretch (polar residues) spans 57-66 (EQSPGTSTPE). The stretch at 67–100 (SKVLLTQADALASRGRIREALEVYRQLSERQQLV) is one TPR 1 repeat. The segment at 158 to 196 (CRKCHGFLSDPVSLSCGHTFCKLCLERGRAADRRCALCG) adopts an RING-type 1 zinc-finger fold. TPR repeat units lie at residues 243–276 (ASQL…APND) and 278–310 (LLYS…RPMG). Residues 322-413 (SQEEAAARGD…TDQGDKPALS (92 aa)) form a disordered region. The segment covering 339 to 352 (AKVKGDGQQHHMKD) has biased composition (basic and acidic residues). The RING-type 2 zinc finger occupies 426 to 464 (CALCMRLFYEPVTTPCGHTFCLKCLERCLDHNAKCPLCK). One can recognise a Lon N-terminal domain in the interval 505-714 (MEELSNLNKN…GIRRVLAFIS (210 aa)).

The chain is LON peptidase N-terminal domain and RING finger protein 3 (LONRF3) from Macaca fascicularis (Crab-eating macaque).